We begin with the raw amino-acid sequence, 115 residues long: Integration host factor subunit alpha (115 aa).

It belongs to the bacterial histone-like protein family. In terms of assembly, heterodimer of an alpha and a beta chain.

This protein is one of the two subunits of integration host factor, a specific DNA-binding protein that functions in genetic recombination as well as in transcriptional and translational control. This is Integration host factor subunit alpha from Burkholderia pseudomallei (strain K96243).